The chain runs to 1133 residues: Early transcription factor large subunit homolog (1133 aa).

Residues 52–352 (KGGRAFFPCD…PNGQPLQRQQ (301 aa)) enclose the Helicase ATP-binding domain. 99-106 (WQTGTGKS) provides a ligand contact to ATP. Positions 281–284 (DEIH) match the DEAH box motif. The 201-residue stretch at 524 to 724 (MMKDILSIIR…EGDKALRKHA (201 aa)) folds into the Helicase C-terminal domain.

This sequence belongs to the DEAD box helicase family. DEAH subfamily.

The protein localises to the virion. The enzyme catalyses ATP + H2O = ADP + phosphate + H(+). Functionally, putative initation factor. In Ornithodoros (relapsing fever ticks), this protein is Early transcription factor large subunit homolog.